The following is a 425-amino-acid chain: Protein CLP1 homolog (425 aa).

ATP contacts are provided by residues E18, K59, and 121 to 126 (DVGKST).

Belongs to the Clp1 family. Clp1 subfamily.

It localises to the nucleus. Functionally, required for endonucleolytic cleavage during polyadenylation-dependent pre-mRNA 3'-end formation. The polypeptide is Protein CLP1 homolog (cbc) (Drosophila pseudoobscura pseudoobscura (Fruit fly)).